Reading from the N-terminus, the 187-residue chain is MRLVLLGPPGSGKGTQAAQMKETLQIPHISTGDLLRSEVVAGTPLGLQAKQVMAQGDLVSDAILIGMLESRLSHTDVVKGFILDGYPRNLSQAAALDGLLAKLGHPLNAVVQLEVPTDVLVERIAGRAQAEGREDDTPDAVRKRLQVYNDSTAPVIGFYQQRGILLRVDGVGRLDEVSQRIVVALGC.

Position 10–15 (10–15) interacts with ATP; it reads GSGKGT. The tract at residues 30 to 59 is NMP; it reads STGDLLRSEVVAGTPLGLQAKQVMAQGDLV. Residues Thr-31, Arg-36, 57 to 59, 85 to 88, and Gln-92 each bind AMP; these read DLV and GYPR. Residues 126–136 form an LID region; that stretch reads GRAQAEGREDD. ATP is bound at residue Arg-127. AMP-binding residues include Arg-133 and Arg-144. An ATP-binding site is contributed by Gly-172.

Belongs to the adenylate kinase family. Monomer.

It is found in the cytoplasm. The enzyme catalyses AMP + ATP = 2 ADP. Its pathway is purine metabolism; AMP biosynthesis via salvage pathway; AMP from ADP: step 1/1. Catalyzes the reversible transfer of the terminal phosphate group between ATP and AMP. Plays an important role in cellular energy homeostasis and in adenine nucleotide metabolism. This Xylella fastidiosa (strain 9a5c) protein is Adenylate kinase.